A 74-amino-acid polypeptide reads, in one-letter code: UPF0352 protein HAPS_0210 (74 aa).

It belongs to the UPF0352 family.

The polypeptide is UPF0352 protein HAPS_0210 (Glaesserella parasuis serovar 5 (strain SH0165) (Haemophilus parasuis)).